Reading from the N-terminus, the 119-residue chain is uncharacterized protein (119 aa).

3 helical membrane-spanning segments follow: residues 28-48 (AWTTGIWLIALCYEIVSHLVF), 55-75 (IEVVHGWVYFVYVLTAFNLAI), and 80-100 (PIGKTVGVLLAGTVPLLGIIV).

This sequence to M.tuberculosis Rv1342c.

Its subcellular location is the cell membrane. This is an uncharacterized protein from Mycobacterium leprae (strain TN).